Here is a 181-residue protein sequence, read N- to C-terminus: Large ribosomal subunit protein uL5c (181 aa).

The protein belongs to the universal ribosomal protein uL5 family. In terms of assembly, part of the 50S ribosomal subunit; contacts the 5S rRNA.

It is found in the plastid. The protein localises to the chloroplast. Binds 5S rRNA, forms part of the central protuberance of the 50S subunit. This is Large ribosomal subunit protein uL5c (rpl5) from Porphyra purpurea (Red seaweed).